The chain runs to 258 residues: Type III pantothenate kinase (258 aa).

6–13 contributes to the ATP binding site; the sequence is DVGNTNTV. Substrate contacts are provided by residues tyrosine 100 and 107–110; that span reads GADR. The active-site Proton acceptor is aspartate 109. Aspartate 129 provides a ligand contact to K(+). Threonine 132 serves as a coordination point for ATP. Substrate is bound at residue threonine 184.

This sequence belongs to the type III pantothenate kinase family. As to quaternary structure, homodimer. Requires NH4(+) as cofactor. It depends on K(+) as a cofactor.

The protein localises to the cytoplasm. The enzyme catalyses (R)-pantothenate + ATP = (R)-4'-phosphopantothenate + ADP + H(+). It participates in cofactor biosynthesis; coenzyme A biosynthesis; CoA from (R)-pantothenate: step 1/5. Functionally, catalyzes the phosphorylation of pantothenate (Pan), the first step in CoA biosynthesis. This Geobacillus kaustophilus (strain HTA426) protein is Type III pantothenate kinase.